Consider the following 184-residue polypeptide: Chaperone protein dnaJ 72 (184 aa).

The J domain maps to 3 to 73; it reads DHYQVLGVTR…LKRASYNAGS (71 aa). A helical transmembrane segment spans residues 133-150; sequence FLLNLALAGGLYFAFTAI.

This sequence belongs to the DnaJ family. C/III subfamily.

It localises to the membrane. In terms of biological role, plays a continuous role in plant development probably in the structural organization of compartments. This Arabidopsis thaliana (Mouse-ear cress) protein is Chaperone protein dnaJ 72 (ATJ72).